An 822-amino-acid chain; its full sequence is Outer dense fiber protein 2 (822 aa).

Residues 26-45 (KGQKTTPAKCQQKHKQKMKG) are disordered. 3 coiled-coil regions span residues 113–418 (CKMN…EECA), 452–490 (DKSD…ALMD), and 516–796 (MEEK…NYVQ).

This sequence belongs to the ODF2 family. Self-associates. Associates with microtubules and forms a fibrillar structure partially linked to the microtubule network.

It is found in the cytoplasm. The protein resides in the cytoskeleton. It localises to the microtubule organizing center. The protein localises to the centrosome. Its subcellular location is the cell projection. It is found in the cilium. The protein resides in the centriole. It localises to the spindle pole. The protein localises to the flagellum. In terms of biological role, seems to be a major component of sperm tail outer dense fibers (ODF). ODFs are filamentous structures located on the outside of the axoneme in the midpiece and principal piece of the mammalian sperm tail and may help to maintain the passive elastic structures and elastic recoil of the sperm tail. The sequence is that of Outer dense fiber protein 2 (ODF2) from Gallus gallus (Chicken).